The chain runs to 149 residues: NADH-quinone oxidoreductase subunit A (149 aa).

A run of 3 helical transmembrane segments spans residues 16–36, 68–88, and 98–118; these read FGIF…GAWF, FYLV…LFAW, and LGFI…VYLV.

It belongs to the complex I subunit 3 family. NDH-1 is composed of 13 different subunits. Subunits NuoA, H, J, K, L, M, N constitute the membrane sector of the complex.

The protein localises to the cell inner membrane. The catalysed reaction is a quinone + NADH + 5 H(+)(in) = a quinol + NAD(+) + 4 H(+)(out). NDH-1 shuttles electrons from NADH, via FMN and iron-sulfur (Fe-S) centers, to quinones in the respiratory chain. The immediate electron acceptor for the enzyme in this species is believed to be ubiquinone. Couples the redox reaction to proton translocation (for every two electrons transferred, four hydrogen ions are translocated across the cytoplasmic membrane), and thus conserves the redox energy in a proton gradient. The protein is NADH-quinone oxidoreductase subunit A of Cronobacter sakazakii (strain ATCC BAA-894) (Enterobacter sakazakii).